We begin with the raw amino-acid sequence, 228 residues long: MALREGPTPARFLPEGLVFCVEGNIGCGKSTLVKALMERVAGSGVNVVEEPVDQWVNHNGKNYLELSYTDPTGYAVPFQNLVFDSYVNVQRLQNPDIMERSPMSATRVFCAVNGSRGVIPATALPGMAARGEAVMRTIATRPVFVYLELPPEECLRRMRRRDRTGEAGVGLDYLRLLHERYEAWLSSAEDVERVDASRSREEIVDRVIEILCRRHPRLRAPLTRKSQL.

G23–S30 provides a ligand contact to ATP. Catalysis depends on E50, which acts as the Proton acceptor. Residues Y68, Q79, and F109 each contribute to the substrate site. An ATP-binding site is contributed by R157.

It belongs to the DCK/DGK family.

It carries out the reaction thymidine + ATP = dTMP + ADP + H(+). This Ictaluridae (bullhead catfishes) protein is Thymidine kinase (TK).